A 130-amino-acid polypeptide reads, in one-letter code: Methylglyoxal synthase (130 aa).

In terms of domain architecture, MGS-like spans 1 to 130 (MSKPRIALIA…DLARNMQDVC (130 aa)). Residues His-11, Lys-15, 37–40 (TGTT), and 57–58 (SG) each bind substrate. The active-site Proton donor/acceptor is the Asp-63. His-90 serves as a coordination point for substrate.

Belongs to the methylglyoxal synthase family.

It catalyses the reaction dihydroxyacetone phosphate = methylglyoxal + phosphate. In terms of biological role, catalyzes the formation of methylglyoxal from dihydroxyacetone phosphate. The polypeptide is Methylglyoxal synthase (Burkholderia ambifaria (strain MC40-6)).